A 275-amino-acid chain; its full sequence is Large ribosomal subunit protein uL2 (275 aa).

The segment at Arg-214–Lys-275 is disordered. The segment covering Lys-255–Lys-275 has biased composition (basic residues).

This sequence belongs to the universal ribosomal protein uL2 family. As to quaternary structure, part of the 50S ribosomal subunit. Forms a bridge to the 30S subunit in the 70S ribosome.

In terms of biological role, one of the primary rRNA binding proteins. Required for association of the 30S and 50S subunits to form the 70S ribosome, for tRNA binding and peptide bond formation. It has been suggested to have peptidyltransferase activity; this is somewhat controversial. Makes several contacts with the 16S rRNA in the 70S ribosome. The sequence is that of Large ribosomal subunit protein uL2 from Blochmanniella pennsylvanica (strain BPEN).